Consider the following 161-residue polypeptide: SsrA-binding protein (161 aa).

The disordered stretch occupies residues 138 to 161 (DKRTDSKEKDWNRDKARIMKSSLR). Residues 139-154 (KRTDSKEKDWNRDKAR) are compositionally biased toward basic and acidic residues.

It belongs to the SmpB family.

The protein localises to the cytoplasm. Functionally, required for rescue of stalled ribosomes mediated by trans-translation. Binds to transfer-messenger RNA (tmRNA), required for stable association of tmRNA with ribosomes. tmRNA and SmpB together mimic tRNA shape, replacing the anticodon stem-loop with SmpB. tmRNA is encoded by the ssrA gene; the 2 termini fold to resemble tRNA(Ala) and it encodes a 'tag peptide', a short internal open reading frame. During trans-translation Ala-aminoacylated tmRNA acts like a tRNA, entering the A-site of stalled ribosomes, displacing the stalled mRNA. The ribosome then switches to translate the ORF on the tmRNA; the nascent peptide is terminated with the 'tag peptide' encoded by the tmRNA and targeted for degradation. The ribosome is freed to recommence translation, which seems to be the essential function of trans-translation. This is SsrA-binding protein from Aliivibrio fischeri (strain ATCC 700601 / ES114) (Vibrio fischeri).